A 365-amino-acid polypeptide reads, in one-letter code: Eukaryotic translation initiation factor 3 subunit H (365 aa).

The region spanning 15-166 (ILLDSLVVMK…LRAWRLSTAA (152 aa)) is the MPN domain.

This sequence belongs to the eIF-3 subunit H family. In terms of assembly, component of the eukaryotic translation initiation factor 3 (eIF-3) complex.

The protein resides in the cytoplasm. Functionally, component of the eukaryotic translation initiation factor 3 (eIF-3) complex, which is involved in protein synthesis of a specialized repertoire of mRNAs and, together with other initiation factors, stimulates binding of mRNA and methionyl-tRNAi to the 40S ribosome. The eIF-3 complex specifically targets and initiates translation of a subset of mRNAs involved in cell proliferation. The polypeptide is Eukaryotic translation initiation factor 3 subunit H (Caenorhabditis elegans).